The primary structure comprises 314 residues: Lysophospholipase D GDPD1 (314 aa).

Residues 1–3 (MSS) lie on the Extracellular side of the membrane. A helical transmembrane segment spans residues 4 to 24 (TAAFCLLSTLGGYLVTSFLLL). Topologically, residues 25–195 (KYPALLHQRK…VDKCYKENSD (171 aa)) are cytoplasmic. A GP-PDE domain is found at 40 to 309 (SRHISHRGGA…DYPTKLKEFL (270 aa)). A divalent metal cation is bound by residues E72, D74, and H87. The helical transmembrane segment at 196–216 (IPILFSLQRVLLILGLFFTGL) threads the bilayer. Residues 217–314 (LPFVPIREQF…LKEFLNNMSA (98 aa)) lie on the Extracellular side of the membrane.

This sequence belongs to the glycerophosphoryl diester phosphodiesterase family.

The protein localises to the cytoplasm. It localises to the membrane. Its subcellular location is the perinuclear region. It is found in the endoplasmic reticulum. The catalysed reaction is a 1-O-alkyl-sn-glycero-3-phosphocholine + H2O = a 1-O-alkyl-sn-glycero-3-phosphate + choline + H(+). It carries out the reaction 1-hexadecanoyl-sn-glycero-3-phosphocholine + H2O = 1-hexadecanoyl-sn-glycero-3-phosphate + choline + H(+). The enzyme catalyses 1-hexadecanoyl-sn-glycero-3-phosphoethanolamine + H2O = 1-hexadecanoyl-sn-glycero-3-phosphate + ethanolamine + H(+). It catalyses the reaction N-hexadecanoyl-sn-glycero-3-phosphoethanolamine + H2O = N-hexadecanoylethanolamine + sn-glycerol 3-phosphate + H(+). The catalysed reaction is N-(5Z,8Z,11Z,14Z-eicosatetraenoyl)-1-(9Z-octadecenoyl)-sn-glycero-3-phosphoethanolamine + H2O = N-(5Z,8Z,11Z,14Z-eicosatetraenoyl)-ethanolamine + 1-(9Z-octadecenoyl)-sn-glycero-3-phosphate + H(+). It carries out the reaction N,1-di-(9Z-octadecenoyl)-sn-glycero-3-phosphoethanolamine + H2O = N-(9Z-octadecenoyl) ethanolamine + 1-(9Z-octadecenoyl)-sn-glycero-3-phosphate + H(+). The enzyme catalyses N-hexadecanoyl-1-(9Z-octadecenoyl)-sn-glycero-3-phosphoethanolamine + H2O = N-hexadecanoylethanolamine + 1-(9Z-octadecenoyl)-sn-glycero-3-phosphate + H(+). It catalyses the reaction 1-O-hexadecyl-sn-glycero-3-phosphocholine + H2O = 1-O-hexadecyl-sn-glycero-3-phosphate + choline + H(+). The catalysed reaction is 1-(9Z-octadecenoyl)-sn-glycero-3-phosphocholine + H2O = 1-(9Z-octadecenoyl)-sn-glycero-3-phosphate + choline + H(+). It carries out the reaction N,1-dihexadecanoyl-sn-glycero-3-phosphoethanolamine + H2O = N-hexadecanoylethanolamine + 1-hexadecanoyl-sn-glycero-3-phosphate + H(+). The enzyme catalyses 1-O-(1Z-octadecenyl)-sn-glycero-3-phospho-(N-5Z,8Z,11Z,14Z-eicosatetraenoyl)-ethanolamine + H2O = 1-O-(1Z-octadecenyl)-sn-glycero-3-phosphate + N-(5Z,8Z,11Z,14Z-eicosatetraenoyl)-ethanolamine + H(+). It catalyses the reaction 1-O-(1Z-octadecenyl)-sn-glycero-3-phospho-(N-9Z-octadecenoyl)-ethanolamine + H2O = 1-O-(1Z-octadecenyl)-sn-glycero-3-phosphate + N-(9Z-octadecenoyl) ethanolamine + H(+). The catalysed reaction is 1-O-(1Z-octadecenyl)-sn-glycero-3-phospho-N-hexadecanoyl-ethanolamine + H2O = 1-O-(1Z-octadecenyl)-sn-glycero-3-phosphate + N-hexadecanoylethanolamine + H(+). Lysophospholipase D activity is increased by magnesium and manganese and inhibited by calcium in a concentration dependent manner. Loss of lysophospholipase D activity by addition of EDTA. Its function is as follows. Hydrolyzes lysoglycerophospholipids to produce lysophosphatidic acid (LPA) and the corresponding amines. Shows a preference for 1-O-alkyl-sn-glycero-3-phosphocholine (lyso-PAF), lysophosphatidylethanolamine (lyso-PE) and lysophosphatidylcholine (lyso-PC). May be involved in bioactive N-acylethanolamine biosynthesis from both N-acyl-lysoplasmenylethanolamin (N-acyl-lysoPlsEt) and N-acyl-lysophosphatidylethanolamin (N-acyl-lysoPE). In addition, hydrolyzes glycerophospho-N-acylethanolamine to N-acylethanolamine. Does not display glycerophosphodiester phosphodiesterase activity, since it cannot hydrolyze either glycerophosphoinositol or glycerophosphocholine. The sequence is that of Lysophospholipase D GDPD1 from Rattus norvegicus (Rat).